The following is a 326-amino-acid chain: MTEIKKLIVLTSGGDAPGMNAAIRAVVRTALHYQFEVYGATAGFAGLVNGQVVPLNSRAVANCIQRGGTILKTGRFENFRFKAVRDKAREFLKKLQIDAMIVLGGNGSFAGASKLYQEGGPQMIGIPCTIDNDIQGTDYCIGFDTACNTALQAIDKIRDTAFSHERNFLIEVMGRSSGFIAVNVGIAGGAEIIALPEFHVDIDTLTQKIKKQHGKKSASIIVAAEANQPGHSFEVAKQIKEKTGIEYRVCVLGHTQRGGTPTVKDRVLASLMGAQAIEALKKGLTEKMIAYQNGKIAVAPLPDPDNGTRYFADEALLRVNNIICAM.

Gly14 provides a ligand contact to ATP. 24–28 lines the ADP pocket; sequence RAVVR. Residues 75–76 and 105–108 contribute to the ATP site; these read RF and GNGS. Asn106 provides a ligand contact to Mg(2+). A substrate-binding site is contributed by 129 to 131; it reads TID. Asp131 serves as the catalytic Proton acceptor. Arg158 contributes to the ADP binding site. Substrate is bound by residues Arg166 and 173–175; that span reads MGR. Residues 189–191, Lys215, and 216–218 contribute to the ADP site; these read GAE and KSA. Substrate contacts are provided by residues Glu225, Arg248, and 254 to 257; that span reads HTQR.

It belongs to the phosphofructokinase type A (PFKA) family. ATP-dependent PFK group I subfamily. Prokaryotic clade 'B1' sub-subfamily. As to quaternary structure, homotetramer. Requires Mg(2+) as cofactor.

The protein resides in the cytoplasm. It carries out the reaction beta-D-fructose 6-phosphate + ATP = beta-D-fructose 1,6-bisphosphate + ADP + H(+). It participates in carbohydrate degradation; glycolysis; D-glyceraldehyde 3-phosphate and glycerone phosphate from D-glucose: step 3/4. Allosterically activated by ADP and other diphosphonucleosides, and allosterically inhibited by phosphoenolpyruvate. In terms of biological role, catalyzes the phosphorylation of D-fructose 6-phosphate to fructose 1,6-bisphosphate by ATP, the first committing step of glycolysis. This is ATP-dependent 6-phosphofructokinase from Coxiella burnetii (strain RSA 493 / Nine Mile phase I).